The following is a 205-amino-acid chain: Peptidyl-tRNA hydrolase (205 aa).

Tyr14 serves as a coordination point for tRNA. The Proton acceptor role is filled by His19. 3 residues coordinate tRNA: Tyr64, Asn66, and Asn112.

It belongs to the PTH family. Monomer.

The protein localises to the cytoplasm. It catalyses the reaction an N-acyl-L-alpha-aminoacyl-tRNA + H2O = an N-acyl-L-amino acid + a tRNA + H(+). In terms of biological role, hydrolyzes ribosome-free peptidyl-tRNAs (with 1 or more amino acids incorporated), which drop off the ribosome during protein synthesis, or as a result of ribosome stalling. Catalyzes the release of premature peptidyl moieties from peptidyl-tRNA molecules trapped in stalled 50S ribosomal subunits, and thus maintains levels of free tRNAs and 50S ribosomes. This chain is Peptidyl-tRNA hydrolase, found in Parvibaculum lavamentivorans (strain DS-1 / DSM 13023 / NCIMB 13966).